A 186-amino-acid chain; its full sequence is uncharacterized protein (186 aa).

The protein belongs to the MG032/MG096/MG288 family.

This is an uncharacterized protein from Mycoplasma pneumoniae (strain ATCC 29342 / M129 / Subtype 1) (Mycoplasmoides pneumoniae).